A 318-amino-acid polypeptide reads, in one-letter code: L-lactate dehydrogenase (318 aa).

Residues valine 16, aspartate 37, and tyrosine 69 each coordinate NAD(+). Substrate-binding positions include glutamine 86, arginine 92, and 124-127; that span reads NPVD. NAD(+) contacts are provided by residues 122-124 and serine 147; that span reads ASN. 152-155 is a binding site for substrate; that stretch reads DSAR. Histidine 179 functions as the Proton acceptor in the catalytic mechanism. A Phosphotyrosine modification is found at tyrosine 223. Threonine 232 serves as a coordination point for substrate.

This sequence belongs to the LDH/MDH superfamily. LDH family. In terms of assembly, homotetramer.

It localises to the cytoplasm. The enzyme catalyses (S)-lactate + NAD(+) = pyruvate + NADH + H(+). Its pathway is fermentation; pyruvate fermentation to lactate; (S)-lactate from pyruvate: step 1/1. Its function is as follows. Catalyzes the conversion of lactate to pyruvate. The sequence is that of L-lactate dehydrogenase from Mycoplasma mycoides subsp. mycoides SC (strain CCUG 32753 / NCTC 10114 / PG1).